A 258-amino-acid polypeptide reads, in one-letter code: MLAKRIIPCLDVRDGQVVKGVQFRNHEIIGDIVPLAKRYAEEGADELVFYDITASSDGRVVDKSWVSRVAEVIDIPFCVAGGIKSLEDAAKILSFGADKISINSPALADPTLITRLADRFGVQCIVVGIDTWYDAETGKYHVNQYTGDESRTRVTQWETLDWVQEVQKRGAGEVVLNMMNQDGVRNGYDLEQLKKVREVCHVPLIASGGAGTMEHFLEAFRDADVDGALAASVFHKQIINIGELKAYLATQGVEIRIC.

Catalysis depends on residues aspartate 11 and aspartate 130.

It belongs to the HisA/HisF family. As to quaternary structure, heterodimer of HisH and HisF.

Its subcellular location is the cytoplasm. The catalysed reaction is 5-[(5-phospho-1-deoxy-D-ribulos-1-ylimino)methylamino]-1-(5-phospho-beta-D-ribosyl)imidazole-4-carboxamide + L-glutamine = D-erythro-1-(imidazol-4-yl)glycerol 3-phosphate + 5-amino-1-(5-phospho-beta-D-ribosyl)imidazole-4-carboxamide + L-glutamate + H(+). It functions in the pathway amino-acid biosynthesis; L-histidine biosynthesis; L-histidine from 5-phospho-alpha-D-ribose 1-diphosphate: step 5/9. Functionally, IGPS catalyzes the conversion of PRFAR and glutamine to IGP, AICAR and glutamate. The HisF subunit catalyzes the cyclization activity that produces IGP and AICAR from PRFAR using the ammonia provided by the HisH subunit. The polypeptide is Imidazole glycerol phosphate synthase subunit HisF (Shigella boydii serotype 4 (strain Sb227)).